The chain runs to 605 residues: Dynein axonemal intermediate chain 2 (605 aa).

WD repeat units lie at residues 150–203 (KTIN…IWDL), 208–246 (KPEL…CWDT), 253–294 (AELS…WWDI), 301–347 (TEVV…SCNR), 355–393 (KIVC…IWSE), 399–437 (SIMW…IWDF), and 443–481 (DPTL…LLEV). The tract at residues 568–605 (IKLTPVPQQPSPEEDQVVEEGEEAAGEEGDEEVEEDLA) is disordered. The span at 579 to 605 (PEEDQVVEEGEEAAGEEGDEEVEEDLA) shows a compositional bias: acidic residues.

Belongs to the dynein intermediate chain family. In terms of assembly, consists of at least two heavy chains and a number of intermediate and light chains. Interacts with DNAAF2. Interacts with DNAAF6/PIH1D3. Interacts with HEATR2; probably involved in outer arm dynein assembly. Interacts with CFAP53. Highly expressed in trachea and testis. Expressed in respiratory ciliated cells (at protein level).

The protein localises to the cytoplasm. Its subcellular location is the cytoskeleton. The protein resides in the cilium axoneme. It is found in the dynein axonemal particle. Part of the dynein complex of respiratory cilia. The protein is Dynein axonemal intermediate chain 2 of Homo sapiens (Human).